Here is an 822-residue protein sequence, read N- to C-terminus: Valine--tRNA ligase (822 aa).

The short motif at 41 to 51 (PNVTGQLHLGH) is the 'HIGH' region element. A 'KMSKS' region motif is present at residues 511 to 515 (KMSKS). An ATP-binding site is contributed by K514. The stretch at 765–822 (EQKGRELKEIQFLKSEILRAEKILTNKGFLEKAPREKIDLERTKLEKLKEKLAFYEKK) forms a coiled coil.

The protein belongs to the class-I aminoacyl-tRNA synthetase family. ValS type 1 subfamily. In terms of assembly, monomer.

It localises to the cytoplasm. The catalysed reaction is tRNA(Val) + L-valine + ATP = L-valyl-tRNA(Val) + AMP + diphosphate. In terms of biological role, catalyzes the attachment of valine to tRNA(Val). As ValRS can inadvertently accommodate and process structurally similar amino acids such as threonine, to avoid such errors, it has a 'posttransfer' editing activity that hydrolyzes mischarged Thr-tRNA(Val) in a tRNA-dependent manner. The chain is Valine--tRNA ligase from Mesomycoplasma hyopneumoniae (strain 7448) (Mycoplasma hyopneumoniae).